The chain runs to 143 residues: Small ribosomal subunit protein bS18m (143 aa).

Belongs to the bacterial ribosomal protein bS18 family. As to quaternary structure, component of the mitochondrial ribosome small subunit (28S) which comprises a 12S rRNA and about 30 distinct proteins.

It is found in the mitochondrion. This is Small ribosomal subunit protein bS18m (MRPS18C) from Bos taurus (Bovine).